The following is a 133-amino-acid chain: Interleukin-4 (133 aa).

An N-terminal signal peptide occupies residues 1 to 24; that stretch reads MGLTSQLIPTLVCLLACTSNFVHG. 3 disulfide bridges follow: cysteine 27/cysteine 133, cysteine 48/cysteine 85, and cysteine 70/cysteine 105. N-linked (GlcNAc...) asparagine glycosylation is present at asparagine 62.

Belongs to the IL-4/IL-13 family.

The protein resides in the secreted. Its function is as follows. Participates in at least several B-cell activation processes as well as of other cell types. It is a costimulator of DNA-synthesis. It induces the expression of class II MHC molecules on resting B-cells. It enhances both secretion and cell surface expression of IgE and IgG1. It also regulates the expression of the low affinity Fc receptor for IgE (CD23) on both lymphocytes and monocytes. Positively regulates IL31RA expression in macrophages. Stimulates autophagy in dendritic cells by interfering with mTORC1 signaling and through the induction of RUFY4. This Sus scrofa (Pig) protein is Interleukin-4 (IL4).